We begin with the raw amino-acid sequence, 522 residues long: Endochitinase 11 (522 aa).

The signal sequence occupies residues 1 to 24 (MLFSMVMFTERWWVGSKDCPRVPA). 2 N-linked (GlcNAc...) asparagine glycosylation sites follow: Asn148 and Asn275. In terms of domain architecture, GH18 spans 235–522 (KHVYAPYVDF…ALTCLRNSTA (288 aa)). The Proton donor role is filled by Glu346. 2 N-linked (GlcNAc...) asparagine glycosylation sites follow: Asn455 and Asn519.

The protein belongs to the glycosyl hydrolase 18 family. Chitinase class V subfamily.

It localises to the secreted. It carries out the reaction Random endo-hydrolysis of N-acetyl-beta-D-glucosaminide (1-&gt;4)-beta-linkages in chitin and chitodextrins.. Functionally, secreted chitinase involved in the degradation of chitin, a component of the cell walls of fungi and exoskeletal elements of some animals (including worms and arthropods). Participates in the infection process and directly acts in the penetration process of the host cuticle. The sequence is that of Endochitinase 11 (chi11) from Metarhizium anisopliae (Entomophthora anisopliae).